We begin with the raw amino-acid sequence, 121 residues long: Large ribosomal subunit protein bL21c (121 aa).

This sequence belongs to the bacterial ribosomal protein bL21 family. Part of the 50S ribosomal subunit.

The protein localises to the plastid. It is found in the chloroplast. This protein binds to 23S rRNA. This chain is Large ribosomal subunit protein bL21c, found in Chaetosphaeridium globosum (Charophycean green alga).